Consider the following 208-residue polypeptide: Mitochondrial import inner membrane translocase subunit Tim23 (208 aa).

3 helical membrane passes run Phe-73–Leu-93, Ala-125–Ile-145, and Gly-173–Leu-193.

Belongs to the Tim17/Tim22/Tim23 family. In terms of assembly, component of the TIM23 complex at least composed of timm23, timm17 and timm50. The complex interacts with the timm44 component of the PAM complex.

It localises to the mitochondrion inner membrane. Functionally, essential component of the TIM23 complex, a complex that mediates the translocation of transit peptide-containing proteins across the mitochondrial inner membrane. Plays an essential role in early embryonic development. This chain is Mitochondrial import inner membrane translocase subunit Tim23 (timm23), found in Danio rerio (Zebrafish).